A 155-amino-acid polypeptide reads, in one-letter code: Ribosomal RNA large subunit methyltransferase H (155 aa).

S-adenosyl-L-methionine is bound by residues Leu72, Gly103, and 122–127 (LSPLTL).

Belongs to the RNA methyltransferase RlmH family. Homodimer.

It localises to the cytoplasm. The catalysed reaction is pseudouridine(1915) in 23S rRNA + S-adenosyl-L-methionine = N(3)-methylpseudouridine(1915) in 23S rRNA + S-adenosyl-L-homocysteine + H(+). Functionally, specifically methylates the pseudouridine at position 1915 (m3Psi1915) in 23S rRNA. The sequence is that of Ribosomal RNA large subunit methyltransferase H from Haemophilus influenzae (strain PittGG).